The following is a 124-amino-acid chain: Small ribosomal subunit protein uS12 (124 aa).

Residues 1-30 (MPTIQQLVRKGRTPKVTKTKAPALKANPQQ) are disordered. Residues 9–18 (RKGRTPKVTK) show a composition bias toward basic residues.

Belongs to the universal ribosomal protein uS12 family. As to quaternary structure, part of the 30S ribosomal subunit. Contacts proteins S8 and S17. May interact with IF1 in the 30S initiation complex.

Its function is as follows. With S4 and S5 plays an important role in translational accuracy. Interacts with and stabilizes bases of the 16S rRNA that are involved in tRNA selection in the A site and with the mRNA backbone. Located at the interface of the 30S and 50S subunits, it traverses the body of the 30S subunit contacting proteins on the other side and probably holding the rRNA structure together. The combined cluster of proteins S8, S12 and S17 appears to hold together the shoulder and platform of the 30S subunit. This chain is Small ribosomal subunit protein uS12, found in Leifsonia xyli subsp. xyli (strain CTCB07).